The primary structure comprises 947 residues: Valine--tRNA ligase (947 aa).

Positions proline 45–histidine 55 match the 'HIGH' region motif. Residues lysine 591 to serine 595 carry the 'KMSKS' region motif. Residue lysine 594 coordinates ATP.

This sequence belongs to the class-I aminoacyl-tRNA synthetase family. ValS type 1 subfamily. As to quaternary structure, monomer.

It localises to the cytoplasm. It catalyses the reaction tRNA(Val) + L-valine + ATP = L-valyl-tRNA(Val) + AMP + diphosphate. Catalyzes the attachment of valine to tRNA(Val). As ValRS can inadvertently accommodate and process structurally similar amino acids such as threonine, to avoid such errors, it has a 'posttransfer' editing activity that hydrolyzes mischarged Thr-tRNA(Val) in a tRNA-dependent manner. The sequence is that of Valine--tRNA ligase from Rhizobium meliloti (strain 1021) (Ensifer meliloti).